We begin with the raw amino-acid sequence, 396 residues long: 1-deoxy-D-xylulose 5-phosphate reductoisomerase (396 aa).

Positions 17, 18, 19, 20, 47, and 130 each coordinate NADPH. K131 contributes to the 1-deoxy-D-xylulose 5-phosphate binding site. NADPH is bound at residue E132. Residue D156 participates in Mn(2+) binding. 1-deoxy-D-xylulose 5-phosphate contacts are provided by S157, E158, S182, and H205. E158 serves as a coordination point for Mn(2+). G211 is an NADPH binding site. Residues S218, N223, K224, and E227 each coordinate 1-deoxy-D-xylulose 5-phosphate. Residue E227 participates in Mn(2+) binding.

Belongs to the DXR family. Mg(2+) serves as cofactor. It depends on Mn(2+) as a cofactor.

It catalyses the reaction 2-C-methyl-D-erythritol 4-phosphate + NADP(+) = 1-deoxy-D-xylulose 5-phosphate + NADPH + H(+). The protein operates within isoprenoid biosynthesis; isopentenyl diphosphate biosynthesis via DXP pathway; isopentenyl diphosphate from 1-deoxy-D-xylulose 5-phosphate: step 1/6. In terms of biological role, catalyzes the NADPH-dependent rearrangement and reduction of 1-deoxy-D-xylulose-5-phosphate (DXP) to 2-C-methyl-D-erythritol 4-phosphate (MEP). In Rhizobium etli (strain CIAT 652), this protein is 1-deoxy-D-xylulose 5-phosphate reductoisomerase.